The primary structure comprises 300 residues: RNA polymerase sigma factor RpoH (300 aa).

The segment at 53 to 122 (LVTSHLRLVA…IQEYILRSWS (70 aa)) is sigma-70 factor domain-2. An Interaction with polymerase core subunit RpoC motif is present at residues 77–80 (EVVS). Residues 231–282 (AMGVLNDRERRIFEARRLAEDPVTLEELSSEFDISRERVRQIEVRAFEKVQE) are sigma-70 factor domain-4. A DNA-binding region (H-T-H motif) is located at residues 255–274 (LEELSSEFDISRERVRQIEV).

It belongs to the sigma-70 factor family. RpoH subfamily. As to quaternary structure, interacts with the RNA polymerase core enzyme.

The protein localises to the cytoplasm. Functionally, sigma factors are initiation factors that promote the attachment of RNA polymerase to specific initiation sites and are then released. This sigma factor is involved in regulation of expression of heat shock genes. The protein is RNA polymerase sigma factor RpoH of Rhizobium radiobacter (Agrobacterium tumefaciens).